Here is a 162-residue protein sequence, read N- to C-terminus: Phospholipase A and acyltransferase 3 (162 aa).

The Cytoplasmic portion of the chain corresponds to 1 to 133; it reads MRAPIPEPKP…VARSDQVRDV (133 aa). An LRAT domain is found at 13-129; that stretch reads LIEIFRPFYR…LRYGVARSDQ (117 aa). Residues histidine 23 and histidine 35 contribute to the active site. The active-site Acyl-thioester intermediate is the cysteine 113. The helical transmembrane segment at 134–154 threads the bilayer; sequence IIAASVAGMGLAAMSLIGVMF. The Lumenal portion of the chain corresponds to 155–162; it reads SRNKRQKQ.

It belongs to the H-rev107 family. Interacts with PPP2R1A; this interaction might decrease PP2A activity. Widely expressed. Low expression, if any, in hematopoietic cells and thymus. In testis, confined to round spermatids. Expressed in normal ovarian epithelial cells. Down-regulated in some ovarian carcinomas and testicular germ cell tumors. Highly expressed in white adipose tissue.

It is found in the cell membrane. The protein localises to the cytoplasm. The protein resides in the cytosol. Its subcellular location is the perinuclear region. It localises to the peroxisome membrane. It is found in the mitochondrion membrane. The protein localises to the nucleus envelope. The protein resides in the lysosome membrane. Its subcellular location is the endoplasmic reticulum membrane. The enzyme catalyses a 1,2-diacyl-sn-glycero-3-phosphocholine + H2O = a 1-acyl-sn-glycero-3-phosphocholine + a fatty acid + H(+). It catalyses the reaction a 1,2-diacyl-sn-glycero-3-phosphocholine + H2O = a 2-acyl-sn-glycero-3-phosphocholine + a fatty acid + H(+). The catalysed reaction is 1,2-dihexadecanoyl-sn-glycero-3-phosphocholine + H2O = 1-hexadecanoyl-sn-glycero-3-phosphocholine + hexadecanoate + H(+). It carries out the reaction 1,2-dihexadecanoyl-sn-glycero-3-phosphocholine + H2O = 2-hexadecanoyl-sn-glycero-3-phosphocholine + hexadecanoate + H(+). The enzyme catalyses 1-hexadecanoyl-2-(9Z-octadecenoyl)-sn-glycero-3-phosphocholine + H2O = 2-(9Z-octadecenoyl)-sn-glycero-3-phosphocholine + hexadecanoate + H(+). It catalyses the reaction 1-hexadecanoyl-2-(9Z-octadecenoyl)-sn-glycero-3-phosphocholine + H2O = 1-hexadecanoyl-sn-glycero-3-phosphocholine + (9Z)-octadecenoate + H(+). The catalysed reaction is 1-hexadecanoyl-2-(5Z,8Z,11Z,14Z-eicosatetraenoyl)-sn-glycero-3-phosphocholine + H2O = 1-hexadecanoyl-sn-glycero-3-phosphocholine + (5Z,8Z,11Z,14Z)-eicosatetraenoate + H(+). It carries out the reaction 1-hexadecanoyl-2-(5Z,8Z,11Z,14Z-eicosatetraenoyl)-sn-glycero-3-phosphocholine + H2O = 2-(5Z,8Z,11Z,14Z)-eicosatetraenoyl-sn-glycero-3-phosphocholine + hexadecanoate + H(+). The enzyme catalyses 1-hexadecanoyl-2-(9Z,12Z-octadecadienoyl)-sn-glycero-3-phosphoethanolamine + H2O = 1-hexadecanoyl-sn-glycero-3-phosphoethanolamine + (9Z,12Z)-octadecadienoate + H(+). It catalyses the reaction 1-hexadecanoyl-2-(9Z,12Z-octadecadienoyl)-sn-glycero-3-phosphoethanolamine + H2O = 2-(9Z,12Z)-octadecadienoyl-sn-glycero-3-phosphoethanolamine + hexadecanoate + H(+). The catalysed reaction is 1-hexadecanoyl-2-(5Z,8Z,11Z,14Z-eicosatetraenoyl)-sn-glycero-3-phosphoethanolamine + H2O = 1-hexadecanoyl-sn-glycero-3-phosphoethanolamine + (5Z,8Z,11Z,14Z)-eicosatetraenoate + H(+). It carries out the reaction 1-hexadecanoyl-2-(5Z,8Z,11Z,14Z-eicosatetraenoyl)-sn-glycero-3-phosphoethanolamine + H2O = 2-(5Z,8Z,11Z,14Z)-eicosatetraenoyl-sn-glycero-3-phosphoethanolamine + hexadecanoate + H(+). The enzyme catalyses 1-hexanoyl-2-acyl-sn-glycero-3-phosphocholine + H2O = hexanoate + a 2-acyl-sn-glycero-3-phosphocholine + H(+). It catalyses the reaction 1-hexanoyl-2-acyl-sn-glycero-3-phosphocholine + H2O = 1-hexanoyl-sn-glycero-3-phosphocholine + a fatty acid + H(+). The catalysed reaction is 1,2-diheptadecanoyl-sn-glycero-3-phosphoethanolamine + 1-(9Z-octadecenoyl)-2-hexadecanoyl-sn-glycero-3-phosphocholine = 1,2-diheptadecanoyl-sn-glycero-3-phospho-N-hexadecanoyl-ethanolamine + 1-(9Z-octadecenoyl)-sn-glycero-3-phosphocholine + H(+). It carries out the reaction 1,2-diheptadecanoyl-sn-glycero-3-phosphoethanolamine + 1-(9Z-octadecenoyl)-2-hexadecanoyl-sn-glycero-3-phosphocholine = 1,2-diheptadecanoyl-sn-glycero-3-phospho-N-(9Z-octadecenoyl)-ethanolamine + 2-hexadecanoyl-sn-glycero-3-phosphocholine + H(+). The enzyme catalyses 1,2-dihexanoyl-sn-glycero-3-phosphoethanolamine + 2-heptanoyl-sn-glycero-3-phosphocholine = hexanoyl-sn-glycero-3-phosphoethanolamine + 1-hexanoyl-2-heptanoyl-sn-glycero-3-phosphocholine. It catalyses the reaction 1-hexadecanoyl-2-octadecanoyl-sn-glycero-3-phosphocholine + H2O = octadecanoate + 1-hexadecanoyl-sn-glycero-3-phosphocholine + H(+). The catalysed reaction is 1-hexadecanoyl-2-octadecanoyl-sn-glycero-3-phosphocholine + H2O = 2-octadecanoyl-sn-glycero-3-phosphocholine + hexadecanoate + H(+). It carries out the reaction 1-octadecanoyl-2-hexadecanoyl-sn-glycero-3-phosphocholine + H2O = 1-octadecanoyl-sn-glycero-3-phosphocholine + hexadecanoate + H(+). The enzyme catalyses 1-octadecanoyl-2-hexadecanoyl-sn-glycero-3-phosphocholine + H2O = 2-hexadecanoyl-sn-glycero-3-phosphocholine + octadecanoate + H(+). It catalyses the reaction 1-hexadecanoyl-2-(9Z,12Z-octadecadienoyl)-sn-glycero-3-phosphocholine + H2O = (9Z,12Z)-octadecadienoate + 1-hexadecanoyl-sn-glycero-3-phosphocholine + H(+). The catalysed reaction is 1-hexadecanoyl-2-(9Z,12Z-octadecadienoyl)-sn-glycero-3-phosphocholine + H2O = 2-(9Z,12Z-octadecadienoyl)-sn-glycero-3-phosphocholine + hexadecanoate + H(+). It carries out the reaction 1,2-di-(9Z-octadecenoyl)-sn-glycero-3-phosphocholine + H2O = 2-(9Z-octadecenoyl)-sn-glycero-3-phosphocholine + (9Z)-octadecenoate + H(+). The enzyme catalyses 1,2-dihexadecanoyl-sn-glycero-3-phosphocholine + H2O = hexadecanoyl-sn-glycero-3-phosphocholine + hexadecanoate + H(+). It catalyses the reaction 1,2-di-(9Z-octadecenoyl)-sn-glycero-3-phosphocholine + H2O = 1-(9Z-octadecenoyl)-sn-glycero-3-phosphocholine + (9Z)-octadecenoate + H(+). The catalysed reaction is 1,2-di-(9Z-octadecenoyl)-sn-glycero-3-phosphoethanolamine + 1,2-dihexadecanoyl-sn-glycero-3-phosphocholine = hexadecanoyl-sn-glycero-3-phosphocholine + N-hexadecanoyl-1,2-di-(9Z-octadecenoyl)-sn-glycero-3-phosphoethanolamine + H(+). It carries out the reaction 1,2-di-(9Z,12Z-octadecadienoyl)-sn-glycero-3-phosphocholine + H2O = 1-(9Z,12Z)-octadecadienoyl-sn-glycero-3-phosphocholine + (9Z,12Z)-octadecadienoate + H(+). In terms of biological role, exhibits both phospholipase A1/2 and acyltransferase activities. Shows phospholipase A1 (PLA1) and A2 (PLA2) activity, catalyzing the calcium-independent release of fatty acids from the sn-1 or sn-2 position of glycerophospholipids. For most substrates, PLA1 activity is much higher than PLA2 activity. Shows O-acyltransferase activity,catalyzing the transfer of a fatty acyl group from glycerophospholipid to the hydroxyl group of lysophospholipid. Shows N-acyltransferase activity, catalyzing the calcium-independent transfer of a fatty acyl group at the sn-1 position of phosphatidylcholine (PC) and other glycerophospholipids to the primary amine of phosphatidylethanolamine (PE), forming N-acylphosphatidylethanolamine (NAPE), which serves as precursor for N-acylethanolamines (NAEs). Exhibits high N-acyltransferase activity and low phospholipase A1/2 activity. Required for complete organelle rupture and degradation that occur during eye lens terminal differentiation, when fiber cells that compose the lens degrade all membrane-bound organelles in order to provide lens with transparency to allow the passage of light. Organelle membrane degradation is probably catalyzed by the phospholipase activity. (Microbial infection) Acts as a host factor for picornaviruses: required during early infection to promote viral genome release into the cytoplasm. May act as a cellular sensor of membrane damage at sites of virus entry, which relocalizes to sites of membrane rupture upon virus unfection. Facilitates safe passage of the RNA away from LGALS8, enabling viral genome translation by host ribosome. May also be involved in initiating pore formation, increasing pore size or in maintaining pores for genome delivery. The lipid-modifying enzyme activity is required for this process. The sequence is that of Phospholipase A and acyltransferase 3 from Homo sapiens (Human).